The sequence spans 637 residues: ATP-dependent zinc metalloprotease FtsH (637 aa).

Topologically, residues 1-7 (MNRVFRN) are cytoplasmic. Residues 8–28 (TIFYLLILLVVIGVVSYFQTS) form a helical membrane-spanning segment. The Extracellular segment spans residues 29-109 (NPKTENMSYS…VEPAQETSGW (81 aa)). The chain crosses the membrane as a helical span at residues 110-130 (VTFLTTIIPFVIIFILFFFLL). At 131–637 (NQAQGGGSRV…TEEKKDDTKE (507 aa)) the chain is on the cytoplasmic side. 201–208 (GPPGTGKT) serves as a coordination point for ATP. Residue H423 coordinates Zn(2+). E424 is a catalytic residue. Residues H427 and D499 each contribute to the Zn(2+) site. Residues 514–637 (FGMSEKLGPL…TEEKKDDTKE (124 aa)) form a not necessary for FtsH function region.

The protein in the central section; belongs to the AAA ATPase family. This sequence in the C-terminal section; belongs to the peptidase M41 family. As to quaternary structure, homohexamer. Interacts with FloT at midcell. Interacts with FloA at midcell. Another study shows only minor colocalization with FloA or FloT. Requires Zn(2+) as cofactor.

It is found in the cell membrane. It localises to the membrane raft. In terms of biological role, acts as a processive, ATP-dependent zinc metallopeptidase for both cytoplasmic and membrane proteins. Plays a role in the quality control of integral membrane proteins. Its function is as follows. In vitro partially degrades Spo0E, the phosphatase that acts on Spo0A-P. Recognition requires the last 14 residues of Spo0E. Its stabile accumulation requires FlotA and Flot. May degrade EzrA. This is ATP-dependent zinc metalloprotease FtsH from Bacillus subtilis (strain 168).